A 647-amino-acid chain; its full sequence is MMSLNSSSVVKSSISGVSWTQSQSVRLSVRRPMVVAMVNSNGRPERSVGVSVDGAVKDVNAPVAVEVADSESKKPTAVVGGGVEDVYGEDSATEDHFITPWSVSVASGYSLLRDPHHNKGLAFTEKERDAHYLRGLLPPVVVNHDLQVKKMMHNIRQYEVPLQRYQAMMDLQERNERLFYKLLIENIEELLPIVYTPTVGEACQKYGTIFKNPQGLYISLKDKGKVLEILKNWPQKKIQVIVVTDGERILGLGDLGCQGMGIPVGKLSLYTALGGIRPSACLPITIDVGTNNEKMLNDEFYIGLRQRRASGKEYAELMNEFMSAVKQNYGEKVLIQFEDFANHNAFDLLEKYRTTHLVFNDDIQGTASVVLAGLISALKLVGGSLADHKFLFLGAGEAGTGIAELIALEISKQTNAPLEETRKKIWLVDSKGLIVRSRLDSLQHFKKPWAHDHEPVNKFLDAVKAIKPTVLIGSSGAGQTFTKEVVEAMSSFNEKPIILALSNPTSQSECTAEQAYTWSEGRTIFASGSPFAPVEYNGKVYVSGQSNNAYIFPGFGLGLIISGAIRVHDEMLLAASEALAEQVTQEHFDNGLIYPPFTNIRKISAHIAAKVAAKAYELGLASRLPQPENLVAYAESCMYSPKYRNYR.

The N-terminal 61 residues, 1-61, are a transit peptide targeting the chloroplast; it reads MMSLNSSSVV…VDGAVKDVNA (61 aa). The active-site Proton donor is the Tyr-195. Arg-248 is an NAD(+) binding site. Residue Lys-266 is the Proton acceptor of the active site. Residues Glu-338, Asp-339, and Asp-362 each coordinate a divalent metal cation. An NAD(+)-binding site is contributed by Asp-362. 391–407 lines the NADP(+) pocket; sequence LFLGAGEAGTGIAELIA. Asn-503 provides a ligand contact to NAD(+).

The protein belongs to the malic enzymes family. Homotetramer. Mg(2+) is required as a cofactor. Mn(2+) serves as cofactor.

It localises to the plastid. The protein resides in the chloroplast. The enzyme catalyses (S)-malate + NADP(+) = pyruvate + CO2 + NADPH. It carries out the reaction oxaloacetate + H(+) = pyruvate + CO2. It participates in photosynthesis; C3 acid pathway. The chloroplastic ME isoform decarboxylates malate shuttled from neighboring mesophyll cells. The CO(2) released is then refixed by ribulose-bisphosphate carboxylase. This pathway eliminates the photorespiratory loss of CO(2) that occurs in most plants. The polypeptide is NADP-dependent malic enzyme, chloroplastic (MODA) (Flaveria pringlei).